The chain runs to 293 residues: Ribosomal protein L11 methyltransferase (293 aa).

The S-adenosyl-L-methionine site is built by threonine 145, glycine 166, aspartate 188, and asparagine 230.

The protein belongs to the methyltransferase superfamily. PrmA family.

The protein resides in the cytoplasm. It carries out the reaction L-lysyl-[protein] + 3 S-adenosyl-L-methionine = N(6),N(6),N(6)-trimethyl-L-lysyl-[protein] + 3 S-adenosyl-L-homocysteine + 3 H(+). Functionally, methylates ribosomal protein L11. In Mannheimia succiniciproducens (strain KCTC 0769BP / MBEL55E), this protein is Ribosomal protein L11 methyltransferase.